The following is a 558-amino-acid chain: Transcription termination factor MTEF18, mitochondrial (558 aa).

A mitochondrion-targeting transit peptide spans 1 to 58; it reads MFMVRLKFASISHNFSTVAAKHRRVPSKYKSLAIGKAQQAITDYLHTTRSLSYTHAEQ.

It belongs to the mTERF family.

The protein localises to the mitochondrion. Transcription termination factor involved in the regulation of mitochondrial-encoded gene expression. Essential for normal plant growth and development. This Arabidopsis thaliana (Mouse-ear cress) protein is Transcription termination factor MTEF18, mitochondrial.